The following is an 814-amino-acid chain: MHPFCCVTTVSDHSPSMPPLPEPQPPLPNYAADFGSARSEPIITRSASQSYNHSGQFNNNLIHSLSFNHHQSDVTDRLGQRVLALPAAVREPPVDVKINDIVGNGIAGILYKWVNYGRGWRPRWFVLQDGVLSYYKIHGPDKIFVSPETEKGSKVIGDESARMISRHNRRGGSSSSCQLRRKPFGEVHLKVSSVRESRSDDKRFSIFTGTKRLHLRAETREDRTTWVEALQAVKDMFPRMSNSELMAPTNNLAMSTEKIRLRLIEEGVSELAIQDCEQIMKSEFSALQSQLVLLKQKQWLLIDTLRQLETEKVDLENTVVDESQRQADNGCSGELRHEKFSEGTATESDDDNERGDAAEEEFDEEENTFFDTRDFLSSSSFKSSGSGFRTSSFSSDEDGFESEDDIDPSIKSIGCNYPRVKRRKNLPDPVEKEKSVSLWSMIKDNIGKDLTKVCLPVYFNEPLSSLQKCFEDLEYSYLLDRAFEYGKRGNSLMRILNVAAFAVSGYASTEGRICKPFNPLLGETYEADYPDKGLRFFSEKVSHHPMVVACHCDGTGWKFWGDSNLRSKFWGRSIQLDPVGVLTLQFDDGEILQWSKVTTSIYNLILGKLYCDHYGTMRIEGSAEYSCKLKFKEQSIIDRNPHQVHGIVQNKSGKTVATMFGKWDESIHFVTGDCSGKGKLSEDMSGAQLLWKRSKPPGNATKYNLTRFAITLNELTPGLKERLPPTDSRLRPDQRYLENGEFEMANTEKLRLEQRQRQARKMQERGWKPRWFMKEKGSESYRYKGGYWEAREDGSWVDCPDIFGHIDSDQQMIE.

The PH domain maps to 103–235 (GNGIAGILYK…WVEALQAVKD (133 aa)). The stretch at 300-367 (LLIDTLRQLE…AEEEFDEEEN (68 aa)) forms a coiled coil. Disordered stretches follow at residues 319–366 (VVDE…DEEE) and 379–411 (SSFKSSGSGFRTSSFSSDEDGFESEDDIDPSIK). Positions 347–366 (ESDDDNERGDAAEEEFDEEE) are enriched in acidic residues. The span at 379-394 (SSFKSSGSGFRTSSFS) shows a compositional bias: low complexity. The span at 395–407 (SDEDGFESEDDID) shows a compositional bias: acidic residues.

Belongs to the OSBP family. In terms of tissue distribution, expressed in roots, leaves, stems, flowers and pollen.

Its function is as follows. May be involved in the transport of sterols. The sequence is that of Oxysterol-binding protein-related protein 1C (ORP1C) from Arabidopsis thaliana (Mouse-ear cress).